A 219-amino-acid chain; its full sequence is Histone H1.4 (219 aa).

Over residues 1–15 (MSETAPAAPAAPAPA) the composition is skewed to low complexity. Residues 1 to 41 (MSETAPAAPAAPAPAEKTPIKKKARKAAGGAKRKASGPPVS) form a disordered region. Serine 2 is modified (N-acetylserine). Serine 2 bears the Phosphoserine mark. Lysine 17 is subject to N6-acetyllysine. Threonine 18 is modified (phosphothreonine). Residues 20–35 (IKKKARKAAGGAKRKA) show a composition bias toward basic residues. Lysine 26 carries the post-translational modification N6-acetyllysine; alternate. An N6-methyllysine; alternate modification is found at lysine 26. Lysine 34 is modified (N6-(beta-hydroxybutyryl)lysine; alternate). An N6-succinyllysine; alternate modification is found at lysine 34. Serine 36 bears the Phosphoserine mark. The H15 domain maps to 36 to 109 (SGPPVSELIT…GASGSFKLNK (74 aa)). Residue lysine 52 is modified to N6-(beta-hydroxybutyryl)lysine. Arginine 54 carries the post-translational modification Citrulline. 4 positions are modified to N6-(beta-hydroxybutyryl)lysine: lysine 64, lysine 85, lysine 90, and lysine 106. Positions 92-219 (TLVQTKGTGA…KPKKTAAKKK (128 aa)) are disordered. Over residues 119 to 140 (KAKKAGAAKAKKPAGAAKKPKK) the composition is skewed to basic residues. Phosphothreonine is present on threonine 146. Basic residues-rich tracts occupy residues 149-160 (KSTKKTPKKAKK) and 168-185 (KKAK…KKAP). Serine 150 carries the post-translational modification ADP-ribosylserine. Residue serine 187 is modified to Phosphoserine. Residues 192-219 (RAVKPKAAKPKTSKPKAAKPKKTAAKKK) are compositionally biased toward basic residues.

The protein belongs to the histone H1/H5 family. In terms of processing, H1 histones are progressively phosphorylated during the cell cycle, becoming maximally phosphorylated during late G2 phase and M phase, and being dephosphorylated sharply thereafter. Acetylated at Lys-26. Deacetylated at Lys-26 by SIRT1. Post-translationally, citrullination at Arg-54 (H1R54ci) by PADI4 takes place within the DNA-binding site of H1 and results in its displacement from chromatin and global chromatin decondensation, thereby promoting pluripotency and stem cell maintenance. In terms of processing, ADP-ribosylated on Ser-150 in response to DNA damage.

The protein resides in the nucleus. It localises to the chromosome. Functionally, histone H1 protein binds to linker DNA between nucleosomes forming the macromolecular structure known as the chromatin fiber. Histones H1 are necessary for the condensation of nucleosome chains into higher-order structured fibers. Also acts as a regulator of individual gene transcription through chromatin remodeling, nucleosome spacing and DNA methylation. The protein is Histone H1.4 of Rattus norvegicus (Rat).